We begin with the raw amino-acid sequence, 1643 residues long: MHRAVDPPGARAAREAFALGGLSCAGAWSSCPPHPPPRSAWLPGGRCSASIGQPPLPAPLPPSHGSSSGHPSKPYYAPGAPTPRPLHGKLESLHGCVQALLREPAQPGLWEQLGQLYESEHDSEEATRCYHSALRYGGSFAELGPRIGRLQQAQLWNFHTGSCQHRAKVLPPLEQVWNLLHLEHKRNYGAKRGGPPVKRAAEPPVVQPVPPAALSGPSGEEGLSPGGKRRRGCNSEQTGLPPGLPLPPPPLPPPPPPPPPPPPPLPGLATSPPFQLTKPGLWSTLHGDAWGPERKGSAPPERQEQRHSLPHPYPYPAPAYTAHPPGHRLVPAAPPGPGPRPPGAESHGCLPATRPPGSDLRESRVQRSRMDSSVSPAATTACVPYAPSRPPGLPGTTTSSSSSSSSNTGLRGVEPNPGIPGADHYQTPALEVSHHGRLGPSAHSSRKPFLGAPAATPHLSLPPGPSSPPPPPCPRLLRPPPPPAWLKGPACRAAREDGEILEELFFGTEGPPRPAPPPLPHREGFLGPPASRFSVGTQDSHTPPTPPTPTTSSSNSNSGSHSSSPAGPVSFPPPPYLARSIDPLPRPPSPAQNPQDPPLVPLTLALPPAPPSSCHQNTSGSFRRPESPRPRVSFPKTPEVGPGPPPGPLSKAPQPVPPGVGELPARGPRLFDFPPTPLEDQFEEPAEFKILPDGLANIMKMLDESIRKEEEQQQHEAGVAPQPPLKEPFASLQSPFPTDTAPTTTAPAVAVTTTTTTTTTTTATQEEEKKPPPALPPPPPLAKFPPPSQPQPPPPPPPSPASLLKSLASVLEGQKYCYRGTGAAVSTRPGPLPTTQYSPGPPSGATALPPTSAAPSAQGSPQPSASSSSQFSTSGGPWARERRAGEEPVPGPMTPTQPPPPLSLPPARSESEVLEEISRACETLVERVGRSATDPADPVDTAEPADSGTERLLPPAQAKEEAGGVAAVSGSCKRRQKEHQKEHRRHRRACKDSVGRRPREGRAKAKAKVPKEKSRRVLGNLDLQSEEIQGREKSRPDLGGASKAKPPTAPAPPSAPAPSAQPTPPSASVPGKKAREEAPGPPGVSRADMLKLRSLSEGPPKELKIRLIKVESGDKETFIASEVEERRLRMADLTISHCAADVVRASRNAKVKGKFRESYLSPAQSVKPKINTEEKLPREKLNPPTPSIYLESKRDAFSPVLLQFCTDPRNPITVIRGLAGSLRLNLGLFSTKTLVEASGEHTVEVRTQVQQPSDENWDLTGTRQIWPCESSRSHTTIAKYAQYQASSFQESLQEEKESEDEESEEPDSTTGTPPSSAPDPKNHHIIKFGTNIDLSDAKRWKPQLQELLKLPAFMRVTSTGNMLSHVGHTILGMNTVQLYMKVPGSRTPGHQENNNFCSVNINIGPGDCEWFAVHEHYWETISAFCDRHGVDYLTGSWWPILDDLYASNIPVYRFVQRPGDLVWINAGTVHWVQATGWCNNIAWNVGPLTAYQYQLALERYEWNEVKNVKSIVPMIHVSWNVARTVKISDPDLFKMIKFCLLQSMKHCQVQRESLVRAGKKIAYQGRVKDEPAYYCNECDVEVFNILFVTSENGSRNTYLVHCEGCARRRSAGLQGVVVLEQYRTEELAQAYDAFTLAPASTSR.

4 disordered regions span residues 52–88 (GQPPLPAPLPPSHGSSSGHPSKPYYAPGAPTPRPLHG), 190–680 (AKRG…PLED), 704–807 (ESIR…LKSL), and 822–1096 (GAAV…RSLS). Composition is skewed to low complexity over residues 63–74 (SHGSSSGHPSKP) and 212–223 (AALSGPSGEEGL). A Phosphoserine modification is found at Ser-224. The segment covering 242–266 (PGLPLPPPPLPPPPPPPPPPPPPLP) has biased composition (pro residues). Basic and acidic residues predominate over residues 291–307 (GPERKGSAPPERQEQRH). Pro residues predominate over residues 332 to 342 (AAPPGPGPRPP). The segment covering 359 to 370 (DLRESRVQRSRM) has biased composition (basic and acidic residues). Residues 394 to 412 (PGTTTSSSSSSSSNTGLRG) are compositionally biased toward low complexity. Pro residues predominate over residues 460-484 (SLPPGPSSPPPPPCPRLLRPPPPPA). Positions 550–569 (TTSSSNSNSGSHSSSPAGPV) are enriched in low complexity. Composition is skewed to pro residues over residues 584 to 600 (LPRPPSPAQNPQDPPLV) and 641 to 658 (GPGPPPGPLSKAPQPVPP). The span at 704–714 (ESIRKEEEQQQ) shows a compositional bias: basic and acidic residues. Positions 740–764 (TAPTTTAPAVAVTTTTTTTTTTTAT) are enriched in low complexity. The segment covering 772–800 (PPALPPPPPLAKFPPPSQPQPPPPPPPSP) has biased composition (pro residues). The segment covering 843–877 (SGATALPPTSAAPSAQGSPQPSASSSSQFSTSGGP) has biased composition (low complexity). Residues 889–904 (VPGPMTPTQPPPPLSL) show a composition bias toward pro residues. The span at 916–929 (EISRACETLVERVG) shows a compositional bias: basic and acidic residues. Positions 972 to 989 (CKRRQKEHQKEHRRHRRA) are enriched in basic residues. Over residues 990 to 1003 (CKDSVGRRPREGRA) the composition is skewed to basic and acidic residues. Over residues 1004-1016 (KAKAKVPKEKSRR) the composition is skewed to basic residues. Over residues 1047 to 1067 (PTAPAPPSAPAPSAQPTPPSA) the composition is skewed to pro residues. A Glycyl lysine isopeptide (Lys-Gly) (interchain with G-Cter in SUMO2) cross-link involves residue Lys-1109. The segment at 1288–1325 (FQESLQEEKESEDEESEEPDSTTGTPPSSAPDPKNHHI) is disordered. Residues 1296–1307 (KESEDEESEEPD) show a composition bias toward acidic residues. The JmjC domain occupies 1339-1502 (RWKPQLQELL…YQLALERYEW (164 aa)). Fe cation contacts are provided by His-1390, Glu-1392, and His-1470. Residues Cys-1575, Cys-1578, Cys-1602, and Cys-1605 each coordinate Zn(2+).

It belongs to the UTX family. In terms of assembly, interacts with TLE1. Component of the MLL4 complex, at least composed of KMT2B/MLL4, ASH2L, RBBP5, WDR5, and KDM6B. Interacts with TBX21, SMARCA4, SMARCC1 and SMARCC2. It depends on L-ascorbate as a cofactor. Fe(2+) serves as cofactor.

The protein localises to the nucleus. The enzyme catalyses N(6),N(6),N(6)-trimethyl-L-lysyl(27)-[histone H3] + 2 2-oxoglutarate + 2 O2 = N(6)-methyl-L-lysyl(27)-[histone H3] + 2 formaldehyde + 2 succinate + 2 CO2. Histone demethylase that specifically demethylates 'Lys-27' of histone H3, thereby playing a central role in histone code. Demethylates trimethylated and dimethylated H3 'Lys-27'. Plays a central role in regulation of posterior development, by regulating HOX gene expression. Involved in inflammatory response by participating in macrophage differentiation in case of inflammation by regulating gene expression and macrophage differentiation. Plays a demethylase-independent role in chromatin remodeling to regulate T-box family member-dependent gene expression by acting as a link between T-box factors and the SMARCA4-containing SWI/SNF remodeling complex. This Homo sapiens (Human) protein is Lysine-specific demethylase 6B (KDM6B).